The chain runs to 238 residues: ATP-dependent dethiobiotin synthetase BioD (238 aa).

12-17 (EVGKTV) is an ATP binding site. Threonine 16 serves as a coordination point for Mg(2+). Lysine 37 is an active-site residue. Residue threonine 41 coordinates substrate. Residues aspartate 50, 109-112 (EGAG), 170-171 (GS), and 200-202 (PAG) each bind ATP. Positions 50 and 109 each coordinate Mg(2+).

It belongs to the dethiobiotin synthetase family. As to quaternary structure, homodimer. The cofactor is Mg(2+).

Its subcellular location is the cytoplasm. It carries out the reaction (7R,8S)-7,8-diammoniononanoate + CO2 + ATP = (4R,5S)-dethiobiotin + ADP + phosphate + 3 H(+). Its pathway is cofactor biosynthesis; biotin biosynthesis; biotin from 7,8-diaminononanoate: step 1/2. Catalyzes a mechanistically unusual reaction, the ATP-dependent insertion of CO2 between the N7 and N8 nitrogen atoms of 7,8-diaminopelargonic acid (DAPA, also called 7,8-diammoniononanoate) to form a ureido ring. In Parafrankia sp. (strain EAN1pec), this protein is ATP-dependent dethiobiotin synthetase BioD.